A 678-amino-acid polypeptide reads, in one-letter code: Putative pentatricopeptide repeat-containing protein At3g18840 (678 aa).

16 PPR repeats span residues 22–56 (TAVSSNQLVNLYSKSGLLREARNVFDEMLERNVYS), 57–84 (WNAVIAAYVKFNNVKEARELFESDNCER), 85–116 (DLITYNTLLSGFAKTDGCESEAIEMFGEMHRK), 124–158 (DDFTVTTMVKLSAKLTNVFYGEQLHGVLVKTGNDG), 159–190 (TKFAVSSLIHMYSKCGKFKEVCNIFNGSCVEF), 192–222 (DSVARNAMIAAYCREGDIDKALSVFWRNPEL), 224–258 (DTISWNTLIAGYAQNGYEEEALKMAVSMEENGLKW), 259–293 (DEHSFGAVLNVLSSLKSLKIGKEVHARVLKNGSYS), 294–324 (NKFVSSGIVDVYCKCGNMKYAESAHLLYGFG), 325–359 (NLYSASSMIVGYSSQGKMVEAKRLFDSLSEKNLVV), 360–390 (WTAMFLGYLNLRQPDSVLELARAFIANETNT), 392–426 (DSLVMVSVLGACSLQAYMEPGKEIHGHSLRTGILM), 427–457 (DKKLVTAFVDMYSKCGNVEYAERIFDSSFER), 458–492 (DTVMYNAMIAGCAHHGHEAKSFQHFEDMTEGGFKP), 493–528 (DEITFMALLSACRHRGLVLEGEKYFKSMIEAYNISP), and 529–563 (ETGHYTCMIDLYGKAYRLDKAIELMEGIDQVEKDA). Residues 565–640 (ILGAFLNACS…FSGCSWANID (76 aa)) are type E motif. Positions 641–671 (KQFHMFTSSDISHYETEAIYAMLHFVTKDLS) are type E(+) motif.

It belongs to the PPR family. PCMP-E subfamily.

The polypeptide is Putative pentatricopeptide repeat-containing protein At3g18840 (PCMP-E92) (Arabidopsis thaliana (Mouse-ear cress)).